The primary structure comprises 146 residues: uncharacterized protein (146 aa).

An N-terminal signal peptide occupies residues 1-17 (MKRLLILTALLPFVGFA). 2 disordered regions span residues 27 to 54 (NQPGYQIPSQQRMQTQMQTQQIQQKGML) and 70 to 146 (ENQI…TIGP). Low complexity predominate over residues 32–54 (QIPSQQRMQTQMQTQQIQQKGML). Residues 77-118 (SQRVLQSQPGERNPARQQMLPNTNGGMLNSNRNPDSSLNQQH) are compositionally biased toward polar residues.

This is an uncharacterized protein from Escherichia coli (strain K12).